A 230-amino-acid polypeptide reads, in one-letter code: Oxaloacetate tautomerase FAHD1, mitochondrial (230 aa).

A mitochondrion-targeting transit peptide spans 1-26 (MAAAAAAAAQRLLAASTKIIGVGRNY). Mg(2+)-binding residues include Glu-73, Glu-75, and Asp-104.

This sequence belongs to the FAH family. It depends on Mg(2+) as a cofactor. The cofactor is Mn(2+).

It localises to the mitochondrion. It carries out the reaction oxaloacetate = enol-oxaloacetate. In terms of biological role, tautomerase that converts enol-oxaloacetate, a strong inhibitor of succinate dehydrogenase, to the physiological keto form of oxaloacetate. This chain is Oxaloacetate tautomerase FAHD1, mitochondrial, found in Oryza sativa subsp. japonica (Rice).